A 305-amino-acid polypeptide reads, in one-letter code: Flavin-dependent thymidylate synthase (305 aa).

Positions 50-261 (GFVRLIDYLG…PCATASFENH (212 aa)) constitute a ThyX domain. Residues Ser96, 119–121 (RHR), and Glu127 contribute to the FAD site. DUMP-binding positions include 116–119 (QWMR), 127–131 (EVSSR), and Arg200. A ThyX motif motif is present at residues 119–129 (RHRTARISEVS). FAD contacts are provided by residues 216–218 (DLH) and His222. A dUMP-binding site is contributed by Arg227. The active-site Involved in ionization of N3 of dUMP, leading to its activation is the Arg227.

The protein belongs to the thymidylate synthase ThyX family. Homotetramer. It depends on FAD as a cofactor.

It catalyses the reaction dUMP + (6R)-5,10-methylene-5,6,7,8-tetrahydrofolate + NADPH + H(+) = dTMP + (6S)-5,6,7,8-tetrahydrofolate + NADP(+). It participates in pyrimidine metabolism; dTTP biosynthesis. Catalyzes the reductive methylation of 2'-deoxyuridine-5'-monophosphate (dUMP) to 2'-deoxythymidine-5'-monophosphate (dTMP) while utilizing 5,10-methylenetetrahydrofolate (mTHF) as the methyl donor, and NADPH and FADH(2) as the reductant. The protein is Flavin-dependent thymidylate synthase of Treponema pallidum (strain Nichols).